Here is a 122-residue protein sequence, read N- to C-terminus: Flowering-promoting factor 1-like protein 3 (122 aa).

A disordered region spans residues 16–36 (ENPGSEESSSAGDGGGGGRRK).

This sequence belongs to the FPF1 family.

The sequence is that of Flowering-promoting factor 1-like protein 3 from Oryza sativa subsp. japonica (Rice).